The following is a 1100-amino-acid chain: Collagen alpha-2(I) chain (1100 aa).

The disordered stretch occupies residues glutamine 1–valine 982. 3 stretches are compositionally biased toward low complexity: residues glutamate 122 to proline 170, glutamate 200 to proline 209, and proline 216 to proline 237. The segment covering phenylalanine 239–glutamine 249 has biased composition (pro residues). Residues proline 251–alanine 261 show a composition bias toward low complexity. The segment covering glycine 268–glycine 277 has biased composition (gly residues). 4 stretches are compositionally biased toward low complexity: residues methionine 333 to alanine 352, serine 358 to alanine 385, alanine 435 to threonine 448, and glutamine 460 to proline 472. Positions glycine 473–glycine 482 are enriched in gly residues. A compositionally biased stretch (low complexity) spans asparagine 507 to glutamine 517. Residues glycine 530–glycine 557 are compositionally biased toward gly residues. Positions lysine 568–proline 579 are enriched in basic and acidic residues. The segment covering proline 633–aspartate 646 has biased composition (low complexity). Positions glycine 656 to glycine 665 are enriched in gly residues. Composition is skewed to low complexity over residues proline 666–arginine 691, phenylalanine 702–lysine 729, and serine 757–glutamine 775. Residues glycine 788–glycine 797 are compositionally biased toward gly residues. Low complexity-rich tracts occupy residues glutamate 798–proline 820 and alanine 854–arginine 866. Gly residues predominate over residues glycine 867 to glycine 876. A compositionally biased stretch (low complexity) spans alanine 877–proline 892. Basic and acidic residues predominate over residues arginine 893–methionine 907. Low complexity predominate over residues leucine 916–asparagine 935. The region spanning threonine 1071–lysine 1100 is the Fibrillar collagen NC1 domain.

The protein belongs to the fibrillar collagen family.

The protein resides in the secreted. The protein localises to the extracellular space. Its subcellular location is the extracellular matrix. This chain is Collagen alpha-2(I) chain, found in Epinephelus caninus (Dogtooth grouper).